A 243-amino-acid polypeptide reads, in one-letter code: Small ribosomal subunit protein uS2c (243 aa).

The tract at residues 224 to 243 (GNNGKVSSDQEDTQELQTVQ) is disordered.

It belongs to the universal ribosomal protein uS2 family.

The protein localises to the plastid. The protein resides in the chloroplast. In Rhodomonas salina (Cryptomonas salina), this protein is Small ribosomal subunit protein uS2c (rps2).